A 231-amino-acid polypeptide reads, in one-letter code: Probable calcium-binding protein CML21 (231 aa).

EF-hand domains are found at residues 54 to 89, 90 to 125, 145 to 180, and 181 to 216; these read DGLR…LEIS, FDEE…VYLL, PTFE…SGER, and SSGR…WVGI. Residues D67, D69, N71, S73, and E78 each coordinate Ca(2+). Ca(2+) contacts are provided by D158, N160, D162, Y164, E169, D194, D196, N198, M200, and E205.

Potential calcium sensor. The chain is Probable calcium-binding protein CML21 (CML21) from Arabidopsis thaliana (Mouse-ear cress).